The sequence spans 68 residues: Guanine nucleotide-binding protein G(I)/G(S)/G(O) subunit gamma-5 (68 aa).

Ser2 carries the post-translational modification N-acetylserine. Phosphoserine is present on Ser2. A Cysteine methyl ester modification is found at Cys65. A lipid anchor (S-geranylgeranyl cysteine) is attached at Cys65. A propeptide spans 66-68 (SFL) (removed in mature form).

Belongs to the G protein gamma family. In terms of assembly, g proteins are composed of 3 units, alpha, beta and gamma. Expressed in a variety of tissues.

The protein resides in the cell membrane. Its function is as follows. Guanine nucleotide-binding proteins (G proteins) are involved as a modulator or transducer in various transmembrane signaling systems. The beta and gamma chains are required for the GTPase activity, for replacement of GDP by GTP, and for G protein-effector interaction. The chain is Guanine nucleotide-binding protein G(I)/G(S)/G(O) subunit gamma-5 (GNG5) from Bos taurus (Bovine).